We begin with the raw amino-acid sequence, 644 residues long: 1-deoxy-D-xylulose-5-phosphate synthase (644 aa).

Thiamine diphosphate-binding positions include His72 and 113–115; that span reads GHA. A Mg(2+)-binding site is contributed by Asp144. Residues 145–146, Asn174, Tyr287, and Glu370 each bind thiamine diphosphate; that span reads GA. Asn174 serves as a coordination point for Mg(2+).

Belongs to the transketolase family. DXPS subfamily. Homodimer. It depends on Mg(2+) as a cofactor. The cofactor is thiamine diphosphate.

It catalyses the reaction D-glyceraldehyde 3-phosphate + pyruvate + H(+) = 1-deoxy-D-xylulose 5-phosphate + CO2. It functions in the pathway metabolic intermediate biosynthesis; 1-deoxy-D-xylulose 5-phosphate biosynthesis; 1-deoxy-D-xylulose 5-phosphate from D-glyceraldehyde 3-phosphate and pyruvate: step 1/1. Functionally, catalyzes the acyloin condensation reaction between C atoms 2 and 3 of pyruvate and glyceraldehyde 3-phosphate to yield 1-deoxy-D-xylulose-5-phosphate (DXP). This chain is 1-deoxy-D-xylulose-5-phosphate synthase, found in Prochlorococcus marinus (strain MIT 9313).